The following is a 71-amino-acid chain: Large ribosomal subunit protein eL38 (71 aa).

Belongs to the eukaryotic ribosomal protein eL38 family.

In Ixodes scapularis (Black-legged tick), this protein is Large ribosomal subunit protein eL38 (RpL38).